The chain runs to 206 residues: Protein-methionine-sulfoxide reductase heme-binding subunit MsrQ (206 aa).

Helical transmembrane passes span 13-33 (IAIWLAATLPLLWLVLSINLG), 79-99 (LLGLWCFAWGTLHLLSYSILE), 116-136 (PYLTLGIISWLVLLALALTST), 147-167 (WQKLHNWVYVVAILAPIHYLW), and 169-189 (VKTLSPWPIIYAVMAALLLLL).

This sequence belongs to the MsrQ family. Heterodimer of a catalytic subunit (MsrP) and a heme-binding subunit (MsrQ). FMN serves as cofactor. It depends on heme b as a cofactor.

It is found in the cell inner membrane. Functionally, part of the MsrPQ system that repairs oxidized periplasmic proteins containing methionine sulfoxide residues (Met-O), using respiratory chain electrons. Thus protects these proteins from oxidative-stress damage caused by reactive species of oxygen and chlorine generated by the host defense mechanisms. MsrPQ is essential for the maintenance of envelope integrity under bleach stress, rescuing a wide series of structurally unrelated periplasmic proteins from methionine oxidation. MsrQ provides electrons for reduction to the reductase catalytic subunit MsrP, using the quinone pool of the respiratory chain. The sequence is that of Protein-methionine-sulfoxide reductase heme-binding subunit MsrQ from Yersinia pestis bv. Antiqua (strain Antiqua).